Reading from the N-terminus, the 404-residue chain is Double-stranded RNA-binding protein 5 (404 aa).

2 consecutive DRBM domains span residues 1–70 (MYKN…RLSL) and 87–155 (VYKN…SLKQ). 3 disordered regions span residues 195–236 (RRRR…STEE), 263–320 (GGRT…RRNA), and 336–362 (RRRP…FSDP). The segment covering 263 to 280 (GGRTQDTASPAPAAAAAS) has biased composition (low complexity). Positions 302–316 (AGAHAARRHAARQGG) are enriched in basic residues.

In terms of biological role, binds double-stranded RNA. In Oryza sativa subsp. japonica (Rice), this protein is Double-stranded RNA-binding protein 5 (DRB5).